The following is a 158-amino-acid chain: Cyclic pyranopterin monophosphate synthase (158 aa).

Substrate contacts are provided by residues 75–77 (LCH) and 113–114 (ME). Aspartate 128 is a catalytic residue.

This sequence belongs to the MoaC family. In terms of assembly, homohexamer; trimer of dimers.

The enzyme catalyses (8S)-3',8-cyclo-7,8-dihydroguanosine 5'-triphosphate = cyclic pyranopterin phosphate + diphosphate. It functions in the pathway cofactor biosynthesis; molybdopterin biosynthesis. Functionally, catalyzes the conversion of (8S)-3',8-cyclo-7,8-dihydroguanosine 5'-triphosphate to cyclic pyranopterin monophosphate (cPMP). In Pasteurella multocida (strain Pm70), this protein is Cyclic pyranopterin monophosphate synthase.